Consider the following 454-residue polypeptide: Tyrosine aminotransferase (454 aa).

Methionine 1 carries the post-translational modification N-acetylmethionine. Lysine 280 bears the N6-(pyridoxal phosphate)lysine mark. Phosphoserine is present on serine 448.

This sequence belongs to the class-I pyridoxal-phosphate-dependent aminotransferase family. In terms of assembly, homodimer. Pyridoxal 5'-phosphate serves as cofactor.

It catalyses the reaction L-tyrosine + 2-oxoglutarate = 3-(4-hydroxyphenyl)pyruvate + L-glutamate. It participates in amino-acid degradation; L-phenylalanine degradation; acetoacetate and fumarate from L-phenylalanine: step 2/6. Functionally, transaminase involved in tyrosine breakdown. Converts tyrosine to p-hydroxyphenylpyruvate. Can catalyze the reverse reaction, using glutamic acid, with 2-oxoglutarate as cosubstrate (in vitro). Has much lower affinity and transaminase activity towards phenylalanine. This Homo sapiens (Human) protein is Tyrosine aminotransferase (TAT).